The following is a 211-amino-acid chain: Adenylate kinase (211 aa).

ATP is bound at residue 10–15; it reads GAGKGT. The segment at 30–59 is NMP; it reads STGGILRAAIQKQTALGKKVQKVVEVGGLV. AMP contacts are provided by residues T31, R36, 57–59, 85–88, and Q92; these read GLV and GFPR. The segment at 121 to 158 is LID; the sequence is GRRVCSACGSSYHVLFAQPKREGVCDRCRGVLVVREDD. R122 lines the ATP pocket. Zn(2+) is bound by residues C125 and C128. An ATP-binding site is contributed by 131–132; sequence SY. The Zn(2+) site is built by C145 and C148. 2 residues coordinate AMP: R155 and R166. P194 serves as a coordination point for ATP.

It belongs to the adenylate kinase family. As to quaternary structure, monomer.

It localises to the cytoplasm. It carries out the reaction AMP + ATP = 2 ADP. It participates in purine metabolism; AMP biosynthesis via salvage pathway; AMP from ADP: step 1/1. Its function is as follows. Catalyzes the reversible transfer of the terminal phosphate group between ATP and AMP. Plays an important role in cellular energy homeostasis and in adenine nucleotide metabolism. The sequence is that of Adenylate kinase from Treponema pallidum (strain Nichols).